The sequence spans 341 residues: HTH-type transcriptional repressor PurR (341 aa).

An HTH lacI-type domain is found at 2 to 56; that stretch reads ATIKDVAKRANVSTTTVSHVINKTRFVAEETRNAVWAAIKELHYSPSAVARSLKV. Residues 4–23 constitute a DNA-binding region (H-T-H motif); sequence IKDVAKRANVSTTTVSHVIN. A DNA-binding region spans residues 48–56; the sequence is SAVARSLKV. Hypoxanthine contacts are provided by tyrosine 73, arginine 190, threonine 192, phenylalanine 221, and aspartate 275.

As to quaternary structure, homodimer.

Its pathway is purine metabolism; purine nucleotide biosynthesis [regulation]. Functionally, is the main repressor of the genes involved in the de novo synthesis of purine nucleotides, regulating purB, purC, purEK, purF, purHD, purL, purMN and guaBA expression. PurR is allosterically activated to bind its cognate DNA by binding the purine corepressors, hypoxanthine or guanine, thereby effecting transcription repression. In Klebsiella pneumoniae subsp. pneumoniae (strain ATCC 700721 / MGH 78578), this protein is HTH-type transcriptional repressor PurR.